We begin with the raw amino-acid sequence, 416 residues long: Phakinin (416 aa).

Positions 1 to 48 are disordered; it reads MSKRRVAADLPSGTNSSMPVQRHRVSSLRGTHSPSSLDSPPASRTSAV. Ser2 carries the N-acetylserine modification. Positions 2-115 are head; it reads SKRRVAADLP…HTTVEDLGGC (114 aa). A phosphoserine mark is found at Ser27, Ser33, Ser36, and Ser91. Residues 28 to 48 show a composition bias toward polar residues; the sequence is LRGTHSPSSLDSPPASRTSAV. Residues 105–416 form the IF rod domain; that stretch reads DHTTVEDLGG…HALLDREENN (312 aa). 3 coiled-coil regions span residues 116–146, 170–249, and 308–402; these read LVEYMTKVHALEQVSQELETQLRAHLESKAK, LENA…VKVL, and QTQE…LQKD. The interval 397–416 is tail; it reads SQLQKDVASYHALLDREENN.

The protein belongs to the intermediate filament family. In terms of assembly, part of a complex required for lens intermediate filament formation composed of BFSP1, BFSP2 and CRYAA. Found in a complex composed of PPL (via C-terminal linker domain), BFSP1 and BFSP2 in the retinal lens. Within the complex interacts with PPL (via C-terminal linker domain) and with BFSP1. Identified in a complex that contains VIM, EZR, AHNAK, BFSP1, BFSP2, ANK2, PLEC, PRX and spectrin. Interacts with LGSN. Interacts with VIM. In terms of tissue distribution, detected in retina lens fiber cells (at protein level). Also expressed in the lens epithelium, abundantly expressed in the anterior and anterolateral epithelium, less frequently expressed nearer the lens coronal equator (at protein level).

It localises to the cell membrane. Its subcellular location is the cytoplasm. The protein localises to the cytoskeleton. It is found in the cell cortex. In terms of biological role, required for the correct formation of lens intermediate filaments as part of a complex composed of BFSP1, BFSP2 and CRYAA. Plays a role in maintenance of retinal lens optical clarity. This is Phakinin (Bfsp2) from Mus musculus (Mouse).